The following is a 528-amino-acid chain: Facilitator of iron transport 1 (528 aa).

The signal sequence occupies residues 1–18 (MKLSSAFVLSAITVAALG). Repeat copies occupy residues 20–98 (SITT…GSGS), 99–168 (SITT…GSGS), and 169–233 (SITT…GSGS). The interval 20 to 274 (SITTTITATK…ERAPASTVAT (255 aa)) is 4 X approximate tandem repeats. Disordered stretches follow at residues 79–100 (SIVEPSTSAQGTSADEGSGSSI), 145–172 (AAETSVAEPSTSAQGTSADEGSGSSITT), and 214–234 (ASPVTSVAEPSASTDEGSGSS). Composition is skewed to polar residues over residues 81-93 (VEPSTSAQGTSAD) and 145-163 (AAETSVAEPSTSAQGTSAD). The stretch at 234-274 (SITTTITATKNGHVYTKTVTQDATFVWTGEGERAPASTVAT) is one 1-4; truncated repeat. Tandem repeats lie at residues 289-294 (SIVEAS), 295-300 (SAVETS), 301-306 (SAAETS), 307-312 (SAVETS), 313-318 (SAVETS), 319-324 (SAVETS), 325-330 (SAAETS), 331-336 (SAAETS), 337-342 (SAVETS), 343-348 (SAVEIS), 349-353 (SAVET), and 354-359 (SAVETS). The segment at 289–359 (SIVEASSAVE…AVETSAVETS (71 aa)) is 12 X 6 AA approximate tandem repeats, Ser/Thr-rich. 2 stretches are compositionally biased toward low complexity: residues 298–388 (ETSS…QASS) and 398–435 (TSSVVPTFSSTTTENSSNSKSTSAVVASTTTSSESSAT). Residues 298–471 (ETSSAAETSS…SNNWSSSSSA (174 aa)) form a disordered region. An N-linked (GlcNAc...) asparagine glycan is attached at Asn-412. Residues 446-457 (YTESSSRDAQSV) show a composition bias toward polar residues. Over residues 462–471 (SNNWSSSSSA) the composition is skewed to low complexity. An N-linked (GlcNAc...) asparagine glycan is attached at Asn-464. 488–495 (GIFTNGKS) contacts ATP. A glycan (N-linked (GlcNAc...) asparagine) is linked at Asn-503. Gly-506 carries the GPI-anchor amidated glycine lipid modification. Positions 507–528 (AADSIAAGTGLMGAALAAVIFL) are cleaved as a propeptide — removed in mature form.

Post-translationally, the GPI-anchor is attached to the protein in the endoplasmic reticulum and serves to target the protein to the cell surface. There, the glucosamine-inositol phospholipid moiety is cleaved off and the GPI-modified mannoprotein is covalently attached via its lipidless GPI glycan remnant to the 1,6-beta-glucan of the outer cell wall layer.

Its subcellular location is the secreted. The protein resides in the cell wall. The protein localises to the membrane. Functionally, involved in the uptake of non-siderophore sources of iron and the siderophores ferrioxamine B and ferrichrome. Has a role in the retention of iron in the cell wall and periplasmic space. This chain is Facilitator of iron transport 1 (FIT1), found in Saccharomyces cerevisiae (strain ATCC 204508 / S288c) (Baker's yeast).